Reading from the N-terminus, the 730-residue chain is Actin filament-associated protein 1 (730 aa).

M1 carries the N-acetylmethionine modification. The tract at residues 47-91 (KDHAQKQETANSLPAPPQMPLPEIPQPWLPPDSGPPPLPTSSLPE) is disordered. Over residues 60–85 (PAPPQMPLPEIPQPWLPPDSGPPPLP) the composition is skewed to pro residues. An SH3-binding motif is present at residues 71 to 74 (PQPW). The SH2-binding 1 signature appears at 94–97 (YEEA). Residues 119–140 (SSSYESYDEEEEDGKGKKTRHQ) form a disordered region. One can recognise a PH 1 domain in the interval 153–249 (DAKICAFLLR…WLKVIKEAYS (97 aa)). Residues 252-292 (SGPVDSECPPPPSSPVHKAELEKKLSSERPSSDGEGVVENG) are disordered. Residues 268-283 (HKAELEKKLSSERPSS) are compositionally biased toward basic and acidic residues. Phosphoserine is present on residues S282 and S283. Positions 347 to 441 (DVPTCGYLNV…WIGILLAETG (95 aa)) constitute a PH 2 domain. The short motif at 451–456 (YDYIDV) is the SH2-binding 2 element. The segment at 512–537 (KGKKPPVASNGVTGKGKTLSSQPKKA) is disordered. S548 is subject to Phosphoserine. The stretch at 557 to 648 (KNRVEADAKR…VKESLKKALA (92 aa)) forms a coiled coil. The interaction with F-actin stretch occupies residues 594–637 (DLRAAIEVNAGRKPQAILEEKLKQLEEECRQKEAERVSLELELT). Phosphoserine is present on residues S664, S665, and S668. Residue T675 is modified to Phosphothreonine. S679 and S687 each carry phosphoserine.

In terms of assembly, monomer and homomultimer. Interacts via its C-terminus with F-actin; probably involving AFAP1 multimers. Interacts with activated SRC SH3-SH2 domains. Interacts via its PH 1 domain with PRKCA, PRKCB and PRKCI. In terms of processing, phosphorylated on tyrosine residues by SRC. As to expression, low expression in normal breast epithelial cell line MCF-10A and in tumorigenic breast cancer cell lines MCF-7, T-47D and ZR-75-1. Highly expressed in the invasive breast cancer cell lines MDA-MB-231 and MDA-MB-435. Overexpressed in prostate carcinoma.

It is found in the cytoplasm. The protein resides in the cytoskeleton. It localises to the stress fiber. Its function is as follows. Can cross-link actin filaments into both network and bundle structures. May modulate changes in actin filament integrity and induce lamellipodia formation. May function as an adapter molecule that links other proteins, such as SRC and PKC to the actin cytoskeleton. Seems to play a role in the development and progression of prostate adenocarcinoma by regulating cell-matrix adhesions and migration in the cancer cells. This Homo sapiens (Human) protein is Actin filament-associated protein 1 (AFAP1).